A 435-amino-acid polypeptide reads, in one-letter code: Elongation factor 1-alpha (435 aa).

The 224-residue stretch at 4 to 227 folds into the tr-type G domain; that stretch reads KPHLNLIVIG…YLDQLELPPK (224 aa). The G1 stretch occupies residues 13–20; sequence GHIDHGKS. Residue 13–20 participates in GTP binding; it reads GHIDHGKS. Mg(2+) is bound at residue S20. The G2 stretch occupies residues 69-73; that stretch reads GVTIN. The tract at residues 90 to 93 is G3; the sequence is DAPG. GTP contacts are provided by residues 90–94 and 152–155; these read DAPGH and NKMD. The segment at 152–155 is G4; sequence NKMD. A G5 region spans residues 193-195; the sequence is VAP.

The protein belongs to the TRAFAC class translation factor GTPase superfamily. Classic translation factor GTPase family. EF-Tu/EF-1A subfamily.

Its subcellular location is the cytoplasm. It catalyses the reaction GTP + H2O = GDP + phosphate + H(+). In terms of biological role, GTP hydrolase that promotes the GTP-dependent binding of aminoacyl-tRNA to the A-site of ribosomes during protein biosynthesis. This is Elongation factor 1-alpha from Saccharolobus solfataricus (strain ATCC 35092 / DSM 1617 / JCM 11322 / P2) (Sulfolobus solfataricus).